The primary structure comprises 387 residues: uncharacterized protein (387 aa).

The protein belongs to the geranylgeranyl reductase family. ChlP subfamily.

This is an uncharacterized protein from Methanosarcina barkeri (strain Fusaro / DSM 804).